Reading from the N-terminus, the 264-residue chain is Homeobox protein vent1 (264 aa).

Basic and acidic residues-rich tracts occupy residues 16 to 26 and 44 to 59; these read KEEATDGKDSM and YAKE…DVQE. Residues 16–140 form a disordered region; sequence KEEATDGKDS…RLRTAFTPQQ (125 aa). Polar residues predominate over residues 60-80; sequence HTTSFQCSLGEQVINRPSANP. Residues 117 to 130 are compositionally biased toward basic and acidic residues; it reads TEQREKSPKSDLQR. The segment at residues 129–188 is a DNA-binding region (homeobox); the sequence is QRRLRTAFTPQQISKLEQAFNKQRYLGAPERKKLATSLQLSEIQVKTWFQNRRMKLKRQI.

Expressed in the ventral marginal zone of gastrulae. At stage 11.5, also expressed in the ventral region of the animal cap (ectoderm). At the end of gastrulation, predominantly localized to the ventral and lateral regions of the closing slit blastopore. At early tail bud stage, expression is maintained only in the forming proctodeum.

Its subcellular location is the nucleus. Functionally, transcriptional repressor. Cooperates with vent2 in a ventral signaling pathway downstream of bmp4, which antagonizes the Spemann organizer and dorsal mesoderm formation, and leads to ventral mesoderm formation. Acts downstream of bmp4 to repress transcription of foxa4-B/XFD-1'. Binds to DNA with preference for the target sequence 5'-CTATT[T/C]G-3'. Also binds 5'-TGCATTTTG-3' at a lower frequency, and occasionally 5'-TTGATC-3'. Binds to the homeobox 2 (HBX2) repressor element in the promoter of the myf5 gene and represses myf5 transcription in the ventral domain. In Xenopus laevis (African clawed frog), this protein is Homeobox protein vent1 (vent1).